Consider the following 191-residue polypeptide: CASP-like protein 4C2 (191 aa).

Over 1–29 (MEAADSATNNSKDTHFYGKSRAENRRRSD) the chain is Cytoplasmic. A helical transmembrane segment spans residues 30–50 (AMLLLFRALTFSFSLAAVVVM). Residues 51-72 (GTNRYRINPQLKVSWYDFEPYR) lie on the Extracellular side of the membrane. Residues 73–93 (YVLAVNAIICIYSFVETWLAV) traverse the membrane as a helical segment. Residues 94 to 116 (YTYLQGSYLLPEIFQVWFDYGHD) lie on the Cytoplasmic side of the membrane. Residues 117 to 137 (QGFAYLLFSANSAGVAMAQLL) traverse the membrane as a helical segment. The Extracellular segment spans residues 138–161 (QSGNTLIHGAYHCTEAGGYCTQAR). Residues 162–182 (VSIALGFVAFLFLALSSLLTG) traverse the membrane as a helical segment. The Cytoplasmic segment spans residues 183–191 (LRVARWYLR).

The protein belongs to the Casparian strip membrane proteins (CASP) family. As to quaternary structure, homodimer and heterodimers.

The protein resides in the cell membrane. The protein is CASP-like protein 4C2 of Physcomitrium patens (Spreading-leaved earth moss).